Here is a 147-residue protein sequence, read N- to C-terminus: Microsomal glutathione S-transferase 2 (147 aa).

3 helical membrane-spanning segments follow: residues 6–26 (SLLA…AWRV), 62–82 (VFIV…AACL), and 107–127 (GFRL…LGVA).

Homotrimer.

The protein localises to the endoplasmic reticulum membrane. It localises to the microsome membrane. The catalysed reaction is RX + glutathione = an S-substituted glutathione + a halide anion + H(+). The enzyme catalyses 1-chloro-2,4-dinitrobenzene + glutathione = 2,4-dinitrophenyl-S-glutathione + chloride + H(+). It carries out the reaction leukotriene C4 = leukotriene A4 + glutathione. It catalyses the reaction (5S)-hydroperoxy-(6E,8Z,11Z,14Z)-eicosatetraenoate + 2 glutathione = (5S)-hydroxy-(6E,8Z,11Z,14Z)-eicosatetraenoate + glutathione disulfide + H2O. Each monomer binds on GSH molecule but only one subunit is catalytically active. In terms of biological role, catalyzes several different glutathione-dependent reactions. Catalyzes the glutathione-dependent reduction of lipid hydroperoxides, such as 5-HPETE. Has glutathione transferase activity, toward xenobiotic electrophiles, such as 1-chloro-2, 4-dinitrobenzene (CDNB). Also catalyzes the conjugation of leukotriene A4 with reduced glutathione to form leukotriene C4 (LTC4). Involved in oxidative DNA damage induced by ER stress and anticancer agents by activating LTC4 biosynthetic machinery in nonimmune cells. The polypeptide is Microsomal glutathione S-transferase 2 (Mus musculus (Mouse)).